A 200-amino-acid chain; its full sequence is Small ribosomal subunit protein uS5 (200 aa).

Over residues 1 to 22 the composition is skewed to basic and acidic residues; it reads MAEERGEKRGRRRDRENPRDRD. A disordered region spans residues 1 to 26; the sequence is MAEERGEKRGRRRDRENPRDRDDESS. Positions 28 to 91 constitute an S5 DRBM domain; the sequence is LVDKLVGINR…EEAKRNLVRI (64 aa).

This sequence belongs to the universal ribosomal protein uS5 family. As to quaternary structure, part of the 30S ribosomal subunit. Contacts proteins S4 and S8.

Functionally, with S4 and S12 plays an important role in translational accuracy. In terms of biological role, located at the back of the 30S subunit body where it stabilizes the conformation of the head with respect to the body. This is Small ribosomal subunit protein uS5 from Hyphomonas neptunium (strain ATCC 15444).